The chain runs to 339 residues: MMGVQICQGMMSEIPFFSPPPQFSYMMNKNIRLHTDSNIRNTFFTDIGIGISANSLLLLFNIFKLTRGQRSRLTDLPIGLLSLINLLMLLMAAFIATDTFISWKGWDDIICKFLVYLYRTFRGLSLCTSCLLSVLQAIILSPRSSCLAKFKHKPPHHISCAILSLSVLYMFIGSHLLVSIIATPNLTTNDFIHVTQSCSILPMSYLMQCMFSTLLAIRDVFLISLMVLSTWYMVALLCRHRKQTRHLQGTSLSPKASPEQRATRSILMLMSLFVLMSVFDSIVCSSRTMYLNDPISYSIQLFMVHIYATVSPFVFIVTEKHIVNFLRSVCEGDECLNIH.

Topologically, residues 1 to 42 (MMGVQICQGMMSEIPFFSPPPQFSYMMNKNIRLHTDSNIRNT) are extracellular. The chain crosses the membrane as a helical span at residues 43–63 (FFTDIGIGISANSLLLLFNIF). Over 64–75 (KLTRGQRSRLTD) the chain is Cytoplasmic. A helical membrane pass occupies residues 76–96 (LPIGLLSLINLLMLLMAAFIA). Topologically, residues 97–119 (TDTFISWKGWDDIICKFLVYLYR) are extracellular. Cysteines 111 and 198 form a disulfide. The helical transmembrane segment at 120–140 (TFRGLSLCTSCLLSVLQAIIL) threads the bilayer. The Cytoplasmic portion of the chain corresponds to 141 to 160 (SPRSSCLAKFKHKPPHHISC). Residues 161–181 (AILSLSVLYMFIGSHLLVSII) form a helical membrane-spanning segment. At 182-213 (ATPNLTTNDFIHVTQSCSILPMSYLMQCMFST) the chain is on the extracellular side. N185 is a glycosylation site (N-linked (GlcNAc...) asparagine). A helical membrane pass occupies residues 214-234 (LLAIRDVFLISLMVLSTWYMV). Residues 235–264 (ALLCRHRKQTRHLQGTSLSPKASPEQRATR) lie on the Cytoplasmic side of the membrane. Residues 265–285 (SILMLMSLFVLMSVFDSIVCS) form a helical membrane-spanning segment. Residues 286-296 (SRTMYLNDPIS) lie on the Extracellular side of the membrane. The chain crosses the membrane as a helical span at residues 297–317 (YSIQLFMVHIYATVSPFVFIV). The Cytoplasmic portion of the chain corresponds to 318-339 (TEKHIVNFLRSVCEGDECLNIH).

The protein belongs to the G-protein coupled receptor 1 family.

Its subcellular location is the cell membrane. Functionally, putative pheromone receptor implicated in the regulation of social as well as reproductive behavior. The sequence is that of Vomeronasal type-1 receptor A14 from Rattus norvegicus (Rat).